A 432-amino-acid chain; its full sequence is Glutamyl-tRNA reductase (432 aa).

Substrate-binding positions include 55 to 58, Ser113, 118 to 120, and Gln124; these read TCNR and EAQ. Catalysis depends on Cys56, which acts as the Nucleophile. An NADP(+)-binding site is contributed by 193-198; sequence GAGEMI.

This sequence belongs to the glutamyl-tRNA reductase family. In terms of assembly, homodimer.

The enzyme catalyses (S)-4-amino-5-oxopentanoate + tRNA(Glu) + NADP(+) = L-glutamyl-tRNA(Glu) + NADPH + H(+). Its pathway is porphyrin-containing compound metabolism; protoporphyrin-IX biosynthesis; 5-aminolevulinate from L-glutamyl-tRNA(Glu): step 1/2. Its function is as follows. Catalyzes the NADPH-dependent reduction of glutamyl-tRNA(Glu) to glutamate 1-semialdehyde (GSA). This chain is Glutamyl-tRNA reductase, found in Paracidovorax citrulli (strain AAC00-1) (Acidovorax citrulli).